The chain runs to 418 residues: Probable aminotransferase Rv1178 (418 aa).

Residues 22-42 are disordered; the sequence is GQGWHDRERPASGQGSGAAER.

It belongs to the class-I pyridoxal-phosphate-dependent aminotransferase family. The cofactor is pyridoxal 5'-phosphate.

The chain is Probable aminotransferase Rv1178 from Mycobacterium tuberculosis (strain ATCC 25618 / H37Rv).